The sequence spans 83 residues: Cytochrome b559 subunit alpha (83 aa).

Residues V21 to W35 form a helical membrane-spanning segment. Heme is bound at residue H23.

The protein belongs to the PsbE/PsbF family. As to quaternary structure, heterodimer of an alpha subunit and a beta subunit. PSII is composed of 1 copy each of membrane proteins PsbA, PsbB, PsbC, PsbD, PsbE, PsbF, PsbH, PsbI, PsbJ, PsbK, PsbL, PsbM, PsbT, PsbX, PsbY, PsbZ, Psb30/Ycf12, at least 3 peripheral proteins of the oxygen-evolving complex and a large number of cofactors. It forms dimeric complexes. Heme b serves as cofactor.

The protein resides in the plastid. It is found in the chloroplast thylakoid membrane. Functionally, this b-type cytochrome is tightly associated with the reaction center of photosystem II (PSII). PSII is a light-driven water:plastoquinone oxidoreductase that uses light energy to abstract electrons from H(2)O, generating O(2) and a proton gradient subsequently used for ATP formation. It consists of a core antenna complex that captures photons, and an electron transfer chain that converts photonic excitation into a charge separation. The chain is Cytochrome b559 subunit alpha from Chaetosphaeridium globosum (Charophycean green alga).